The sequence spans 354 residues: Neutral protease 2 homolog BCIN_12g06300 (354 aa).

A signal peptide spans 1–19 (MRSFSKILAVASLAAIANS). Residues 20–179 (AVLKRDNNVL…PSSIDRRTVL (160 aa)) constitute a propeptide that is removed on maturation. 2 disulfides stabilise this stretch: Cys-183–Cys-255 and Cys-262–Cys-280. A Zn(2+)-binding site is contributed by His-305. Glu-306 is an active-site residue. Residues His-309 and Asp-320 each coordinate Zn(2+).

The protein belongs to the peptidase M35 family. It depends on Zn(2+) as a cofactor.

It localises to the secreted. The enzyme catalyses Preferential cleavage of bonds with hydrophobic residues in P1'. Also 3-Asn-|-Gln-4 and 8-Gly-|-Ser-9 bonds in insulin B chain.. In terms of biological role, secreted metalloproteinase that allows assimilation of proteinaceous substrates. Shows high activities on basic nuclear substrates such as histone and protamine. In Botryotinia fuckeliana (strain B05.10) (Noble rot fungus), this protein is Neutral protease 2 homolog BCIN_12g06300.